The sequence spans 715 residues: MIYEGKAITVKALESGIVELKFDLKGESVNKFNRLTLNELRQAVDTIKADASIKGVIVSSGKDVFIVGADITEFVDNFKLPDAELVAGNLEANKIFSDFEDLNVPTVAAINGIALGGGLEMCLAADYRVMSTKAKIGLPEVKLGIYPGFGGTVRLPRLIGADNAIEWIAAGKENRPEDALKVGAVDAVVAPEKLQDAALELIKRAVSGEFDYKAKRQPKLEKLRLNAIEQMMAFETAKGFVAGQAGPNYPAPVEAIKTIQKAANFGRDKALEVEAAGFVKLAKTSAAQSLIGLFLNDQELKKKAKAYDEIAKDVKQAAVLGAGIMGGGIAYQSASKGTPILMKDINEHGIEQGLAEAAKLLVGRVDKGRMTAAKMAEVLNGIRPTLSYGDFGHVDLVVEAVVENPKVKQAVLAEVEDKVKEDTILASNTSTISISLLAKALKRPENFVGMHFFNPVHMMPLVEVIRGEKSSELAIATTVAYAKKMGKNPIVVNDCPGFLVNRVLFPYFGGFAKLVSAGVDFVRIDKIMEKFGWPMGPAYLMDVVGIDTGHHGRDVMAEGFPDRMKDDRRSAIDVLYEAKRLGQKNGKGFYAYEADKKGKQKKVADPSVLEVLKPIVYEQREVTDEDIINWMMIPLCLETVRCLEDGIVETAAEADMGLVYGIGFPPFRGGALRYIDSIGVAEFVALADQYADLGALYHPTAKLREMAKNGQSFFG.

Residues 1-190 form an enoyl-CoA hydratase/isomerase region; the sequence is MIYEGKAITV…KVGAVDAVVA (190 aa). Asp297 lines the substrate pocket. The interval 312–715 is 3-hydroxyacyl-CoA dehydrogenase; sequence KDVKQAAVLG…MAKNGQSFFG (404 aa). NAD(+) is bound by residues Met325, Asp344, 401 to 403, Lys408, and Ser430; that span reads VVE. His451 serves as the catalytic For 3-hydroxyacyl-CoA dehydrogenase activity. Asn454 contacts NAD(+). Substrate-binding residues include Asn501 and Tyr660.

The protein in the N-terminal section; belongs to the enoyl-CoA hydratase/isomerase family. In the C-terminal section; belongs to the 3-hydroxyacyl-CoA dehydrogenase family. As to quaternary structure, heterotetramer of two alpha chains (FadB) and two beta chains (FadA).

The catalysed reaction is a (3S)-3-hydroxyacyl-CoA + NAD(+) = a 3-oxoacyl-CoA + NADH + H(+). It carries out the reaction a (3S)-3-hydroxyacyl-CoA = a (2E)-enoyl-CoA + H2O. It catalyses the reaction a 4-saturated-(3S)-3-hydroxyacyl-CoA = a (3E)-enoyl-CoA + H2O. The enzyme catalyses (3S)-3-hydroxybutanoyl-CoA = (3R)-3-hydroxybutanoyl-CoA. The catalysed reaction is a (3Z)-enoyl-CoA = a 4-saturated (2E)-enoyl-CoA. It carries out the reaction a (3E)-enoyl-CoA = a 4-saturated (2E)-enoyl-CoA. It participates in lipid metabolism; fatty acid beta-oxidation. Involved in the aerobic and anaerobic degradation of long-chain fatty acids via beta-oxidation cycle. Catalyzes the formation of 3-oxoacyl-CoA from enoyl-CoA via L-3-hydroxyacyl-CoA. It can also use D-3-hydroxyacyl-CoA and cis-3-enoyl-CoA as substrate. In Pseudomonas fluorescens (strain Pf0-1), this protein is Fatty acid oxidation complex subunit alpha.